Reading from the N-terminus, the 402-residue chain is Exodeoxyribonuclease 7 large subunit (402 aa).

This sequence belongs to the XseA family. Heterooligomer composed of large and small subunits.

It localises to the cytoplasm. It catalyses the reaction Exonucleolytic cleavage in either 5'- to 3'- or 3'- to 5'-direction to yield nucleoside 5'-phosphates.. Its function is as follows. Bidirectionally degrades single-stranded DNA into large acid-insoluble oligonucleotides, which are then degraded further into small acid-soluble oligonucleotides. This Moorella thermoacetica (strain ATCC 39073 / JCM 9320) protein is Exodeoxyribonuclease 7 large subunit.